A 654-amino-acid chain; its full sequence is Acetyl-coenzyme A synthetase (654 aa).

Residues 196–199 (RGGK) and threonine 316 each bind CoA. Residues 392-394 (GEP), 416-421 (DTWWQT), aspartate 506, and arginine 521 each bind ATP. Position 529 (serine 529) interacts with CoA. Residue arginine 532 participates in ATP binding. 2 residues coordinate Mg(2+): valine 543 and valine 548. Lysine 618 carries the N6-acetyllysine modification.

The protein belongs to the ATP-dependent AMP-binding enzyme family. It depends on Mg(2+) as a cofactor. Post-translationally, acetylated. Deacetylation by the SIR2-homolog deacetylase activates the enzyme.

The enzyme catalyses acetate + ATP + CoA = acetyl-CoA + AMP + diphosphate. Catalyzes the conversion of acetate into acetyl-CoA (AcCoA), an essential intermediate at the junction of anabolic and catabolic pathways. AcsA undergoes a two-step reaction. In the first half reaction, AcsA combines acetate with ATP to form acetyl-adenylate (AcAMP) intermediate. In the second half reaction, it can then transfer the acetyl group from AcAMP to the sulfhydryl group of CoA, forming the product AcCoA. In Methylobacillus flagellatus (strain ATCC 51484 / DSM 6875 / VKM B-1610 / KT), this protein is Acetyl-coenzyme A synthetase.